The following is a 1382-amino-acid chain: Hepatocyte growth factor receptor (1382 aa).

The signal sequence occupies residues 1–24 (MKAPTALAPGILLLLLTLAQRSHG). Over 25-935 (ECKEALVKSE…IVQPDQNFAG (911 aa)) the chain is Extracellular. A Sema domain is found at 27-516 (KEALVKSEMN…TGKKITKIPL (490 aa)). A glycan (N-linked (GlcNAc...) asparagine) is linked at Asn45. Intrachain disulfides connect Cys95–Cys101, Cys98–Cys160, Cys133–Cys141, and Cys173–Cys176. An N-linked (GlcNAc...) asparagine glycan is attached at Asn106. Residues Asn203 and Asn359 are each glycosylated (N-linked (GlcNAc...) asparagine). 2 disulfides stabilise this stretch: Cys299–Cys364 and Cys386–Cys398. N-linked (GlcNAc...) asparagine glycans are attached at residues Asn400 and Asn406. Cystine bridges form between Cys521–Cys539, Cys527–Cys562, Cys530–Cys546, and Cys542–Cys552. IPT/TIG domains follow at residues 564-656 (PAVY…FSYV), 658-740 (PVIT…FSYR), and 743-837 (PVVS…LTYV). Thr583 is a glycosylation site (O-linked (Man) threonine). Asn608 and Asn636 each carry an N-linked (GlcNAc...) asparagine glycan. 2 O-linked (Man) threonine glycosylation sites follow: Thr677 and Thr762. Residues Asn786 and Asn880 are each glycosylated (N-linked (GlcNAc...) asparagine). Residues 936-956 (LIIGAVSISVVVLLVSGLFLW) form a helical membrane-spanning segment. Residues 957 to 1379 (LRKRKHKDLG…LPSQDNIDGE (423 aa)) are Cytoplasmic-facing. Position 967 is a phosphoserine (Ser967). Phosphothreonine is present on Thr978. Phosphoserine is present on residues Ser991, Ser998, and Ser1001. The residue at position 1004 (Tyr1004) is a Phosphotyrosine. Residues 1079–1346 (VHFNEVIGRG…RISSIFSTFI (268 aa)) form the Protein kinase domain. Residues 1085-1093 (IGRGHFGCV) and Lys1111 each bind ATP. The active-site Proton acceptor is Asp1205. The interaction with RANBP9 stretch occupies residues 1213–1382 (LDEKFTVKVA…QDNIDGEANT (170 aa)). Residue Tyr1231 is modified to Phosphotyrosine. Tyr1235 and Tyr1236 each carry phosphotyrosine; by autocatalysis. Thr1290 carries the post-translational modification Phosphothreonine. Positions 1321 to 1360 (WHPKAEMRPSVSELVSRISSIFSTFIGEHYVHVNATYVNV) are interaction with MUC20. A phosphotyrosine; by autocatalysis mark is found at Tyr1350 and Tyr1357. At Tyr1366 the chain carries Phosphotyrosine.

This sequence belongs to the protein kinase superfamily. Tyr protein kinase family. In terms of assembly, heterodimer made of an alpha chain (50 kDa) and a beta chain (145 kDa) which are disulfide linked. Binds PLXNB1. Interacts when phosphorylated with downstream effectors including STAT3, PIK3R1, SRC, PCLG1, GRB2 and GAB1. Interacts with SPSB1, SPSB2 and SPSB4. Interacts with INPP5D/SHIP1. When phosphorylated at Tyr-1357, interacts with INPPL1/SHIP2. Interacts with RANBP9 and RANBP10, as well as SPSB1, SPSB2, SPSB3 and SPSB4. SPSB1 binding occurs in the presence and in the absence of HGF, however HGF treatment has a positive effect on this interaction. Interacts with MUC20; prevents interaction with GRB2 and suppresses hepatocyte growth factor-induced cell proliferation. Interacts with GRB10. Interacts with PTPN1 and PTPN2. Interacts with HSP90AA1 and HSP90AB1; the interaction suppresses MET kinase activity. Interacts with tensin TNS3. Interacts (when phosphorylated) with tensin TNS4 (via SH2 domain); the interaction increases MET protein stability by inhibiting MET endocytosis and subsequent lysosomal degradation. In terms of processing, autophosphorylated in response to ligand binding on Tyr-1235 and Tyr-1236 in the kinase domain leading to further phosphorylation of Tyr-1350 and Tyr-1357 in the C-terminal multifunctional docking site. Dephosphorylated by PTPRJ at Tyr-1350 and Tyr-1366. Dephosphorylated by PTPN1 and PTPN2. Post-translationally, ubiquitinated. Ubiquitination by CBL regulates the receptor stability and activity through proteasomal degradation. O-mannosylation of IPT/TIG domains by TMEM260 is required for protein maturation. O-mannosylated residues are composed of single mannose glycans that are not elongated or modified. In terms of tissue distribution, expressed at highest levels in lung, liver and kidney, also expressed in stomach, intestine, spleen, testis and brain. Not expressed in heart or muscle.

It localises to the membrane. The catalysed reaction is L-tyrosyl-[protein] + ATP = O-phospho-L-tyrosyl-[protein] + ADP + H(+). In its inactive state, the C-terminal tail interacts with the catalytic domain and inhibits the kinase activity. Upon ligand binding, the C-terminal tail is displaced and becomes phosphorylated, thus increasing the kinase activity. In terms of biological role, receptor tyrosine kinase that transduces signals from the extracellular matrix into the cytoplasm by binding to hepatocyte growth factor/HGF ligand. Regulates many physiological processes including proliferation, scattering, morphogenesis and survival. Ligand binding at the cell surface induces autophosphorylation of MET on its intracellular domain that provides docking sites for downstream signaling molecules. Following activation by ligand, interacts with the PI3-kinase subunit PIK3R1, PLCG1, SRC, GRB2, STAT3 or the adapter GAB1. Recruitment of these downstream effectors by MET leads to the activation of several signaling cascades including the RAS-ERK, PI3 kinase-AKT, or PLCgamma-PKC. The RAS-ERK activation is associated with the morphogenetic effects while PI3K/AKT coordinates prosurvival effects. During embryonic development, MET signaling plays a role in gastrulation, development and migration of muscles and neuronal precursors, angiogenesis and kidney formation. In adults, participates in wound healing as well as organ regeneration and tissue remodeling. Also promotes differentiation and proliferation of hematopoietic cells. The protein is Hepatocyte growth factor receptor (Met) of Rattus norvegicus (Rat).